The chain runs to 512 residues: Ribose import ATP-binding protein RbsA 1 (512 aa).

2 ABC transporter domains span residues 8–244 (FRME…IGRE) and 254–502 (AHRG…LNIA). 40-47 (GENGAGKS) serves as a coordination point for ATP.

It belongs to the ABC transporter superfamily. Ribose importer (TC 3.A.1.2.1) family. As to quaternary structure, the complex is composed of an ATP-binding protein (RbsA), two transmembrane proteins (RbsC) and a solute-binding protein (RbsB).

It is found in the cell inner membrane. It carries out the reaction D-ribose(out) + ATP + H2O = D-ribose(in) + ADP + phosphate + H(+). Functionally, part of the ABC transporter complex RbsABC involved in ribose import. Responsible for energy coupling to the transport system. This is Ribose import ATP-binding protein RbsA 1 from Rhizobium johnstonii (strain DSM 114642 / LMG 32736 / 3841) (Rhizobium leguminosarum bv. viciae).